Consider the following 688-residue polypeptide: Probable xyloglucan glycosyltransferase 7 (688 aa).

Residues 1 to 25 form a disordered region; that stretch reads MAPSWWGRSGGGGVGNGGGTPVVVK. The span at 8 to 20 shows a compositional bias: gly residues; that stretch reads RSGGGGVGNGGGT. The next 2 helical transmembrane spans lie at 121–141 and 183–203; these read VSLV…LQGW and VALF…CFWI. Aspartate 269 is a catalytic residue. Substrate is bound by residues aspartate 328 and aspartate 330. Aspartate 422 is a catalytic residue. 2 consecutive transmembrane segments (helical) span residues 500–520 and 525–545; these read LILP…TMFV and LPAW…ILPA. Positions 604–635 are disordered; it reads HSKQQRVGSAPNLDALTKEESNPKKDSKKKKH. Over residues 619–628 the composition is skewed to basic and acidic residues; the sequence is LTKEESNPKK. Helical transmembrane passes span 638–657 and 663–683; these read IYRK…ARSL and IHFY…LDLI.

Belongs to the glycosyltransferase 2 family. Plant cellulose synthase-like C subfamily.

It localises to the golgi apparatus membrane. In terms of biological role, probable beta-1,4-glucan synthase rather involved in the synthesis of the xyloglucan backbone than cellulose. Seems to work simultaneously with xyloglucan 6-xylosyltransferase. Xyloglucan is a noncellulosic polysaccharides of plant cell wall and consists of a glucan backbone substituted by xylose, galactose and fucose. This Oryza sativa subsp. japonica (Rice) protein is Probable xyloglucan glycosyltransferase 7 (CSLC7).